The following is a 693-amino-acid chain: Pentatricopeptide repeat-containing protein At2g19280 (693 aa).

PPR repeat units follow at residues leucine 200–proline 234, serine 235–leucine 269, asparagine 270–proline 304, aspartate 305–glutamine 339, aspartate 340–arginine 370, asparagine 372–proline 406, aspartate 407–proline 441, serine 442–leucine 476, aspartate 477–proline 511, aspartate 512–proline 546, serine 547–proline 581, aspartate 582–proline 616, and aspartate 617–proline 651.

Belongs to the PPR family. P subfamily.

This is Pentatricopeptide repeat-containing protein At2g19280 from Arabidopsis thaliana (Mouse-ear cress).